A 239-amino-acid polypeptide reads, in one-letter code: Endonuclease V (239 aa).

2 residues coordinate Mg(2+): Asp50 and Asp118.

This sequence belongs to the endonuclease V family. It depends on Mg(2+) as a cofactor.

It localises to the cytoplasm. It catalyses the reaction Endonucleolytic cleavage at apurinic or apyrimidinic sites to products with a 5'-phosphate.. In terms of biological role, DNA repair enzyme involved in the repair of deaminated bases. Selectively cleaves double-stranded DNA at the second phosphodiester bond 3' to a deoxyinosine leaving behind the intact lesion on the nicked DNA. The polypeptide is Endonuclease V (Xylella fastidiosa (strain Temecula1 / ATCC 700964)).